The chain runs to 202 residues: Ribosome maturation factor RimP (202 aa).

This sequence belongs to the RimP family.

It is found in the cytoplasm. Its function is as follows. Required for maturation of 30S ribosomal subunits. The polypeptide is Ribosome maturation factor RimP (Polaromonas naphthalenivorans (strain CJ2)).